The chain runs to 192 residues: dTTP/UTP pyrophosphatase (192 aa).

The Proton acceptor role is filled by D71.

It belongs to the Maf family. YhdE subfamily. A divalent metal cation is required as a cofactor.

The protein localises to the cytoplasm. The catalysed reaction is dTTP + H2O = dTMP + diphosphate + H(+). It carries out the reaction UTP + H2O = UMP + diphosphate + H(+). Its function is as follows. Nucleoside triphosphate pyrophosphatase that hydrolyzes dTTP and UTP. May have a dual role in cell division arrest and in preventing the incorporation of modified nucleotides into cellular nucleic acids. This is dTTP/UTP pyrophosphatase from Pseudoalteromonas atlantica (strain T6c / ATCC BAA-1087).